The chain runs to 106 residues: UPF0145 protein VCM66_A0911 (106 aa).

The protein belongs to the UPF0145 family.

This chain is UPF0145 protein VCM66_A0911, found in Vibrio cholerae serotype O1 (strain M66-2).